We begin with the raw amino-acid sequence, 911 residues long: Inter-alpha-trypsin inhibitor heavy chain H1 (911 aa).

A signal peptide spans 1–27; it reads MDGAMGPRGLLLCMYLVSLLILQAMPA. Positions 28–34 are excised as a propeptide; sequence LGSATGR. The VIT domain maps to 37–166; it reads SSEKRQAVDT…KVTFQLTYEE (130 aa). Residue cysteine 60 is glycosylated (S-linked (Hex...) cysteine). Serine 129 is modified (phosphoserine). Positions 181–184 match the Phagocytosis uptake signal motif; it reads VKPK. 2 cysteine pairs are disulfide-bonded: cysteine 244–cysteine 247 and cysteine 268–cysteine 540. N-linked (GlcNAc...) (complex) asparagine glycosylation occurs at asparagine 285. In terms of domain architecture, VWFA spans 290–450; the sequence is NKNVVFVIDI…FNFLEVMSME (161 aa). A hyaluronan-binding region spans residues 387 to 911; that stretch reads SLPELSNHAS…YTDYIVPDIF (525 aa). Threonine 402 and threonine 407 each carry phosphothreonine. N-linked (GlcNAc...) (complex) asparagine glycosylation occurs at asparagine 588. Threonine 653 carries O-linked (GalNAc...) threonine glycosylation. Residue aspartate 672 is modified to Aspartate 1-(chondroitin 4-sulfate)-ester. Residues 673-911 constitute a propeptide that is removed on maturation; the sequence is PHFIIHVPQK…YTDYIVPDIF (239 aa). N-linked (GlcNAc...) asparagine glycosylation is present at asparagine 750.

The protein belongs to the ITIH family. I-alpha-I plasma protease inhibitors are assembled from one or two heavy chains (HC) and one light chain, bikunin. Inter-alpha-inhibitor (I-alpha-I) is composed of ITIH1/HC1, ITIH2/HC2 and bikunin. Interacts with TNFAIP6 (via Link and CUB domains). Heavy chains are linked to bikunin via chondroitin 4-sulfate esterified to the alpha-carboxyl of the C-terminal aspartate after propeptide cleavage. Post-translationally, the S-linked glycan is composed of two 6-carbon sugars, possibly Glc or Gal.

The protein resides in the secreted. Its function is as follows. May act as a carrier of hyaluronan in serum or as a binding protein between hyaluronan and other matrix protein, including those on cell surfaces in tissues to regulate the localization, synthesis and degradation of hyaluronan which are essential to cells undergoing biological processes. Functionally, contains a potential peptide which could stimulate a broad spectrum of phagocytotic cells. This chain is Inter-alpha-trypsin inhibitor heavy chain H1 (ITIH1), found in Homo sapiens (Human).